Reading from the N-terminus, the 600-residue chain is MALRRALPALRPCIPRFVPLSTAPASREQPAAGPAAVPGGGSATAVRPPVPAVDFGNAQEAYRSRRTWELARSLLVLRLCAWPALLARHEQLLYVSRKLLGQRLFNKLMKMTFYGHFVAGEDQESIQPLLRHYRAFGVSAILDYGVEEDLSPEEAEHKEMESCTSAAERDGSGTNKRDKQYQAHWAFGDRRNGVISARTYFYANEAKCDSHMETFLRCIEASGRVSDDGFIAIKLTALGRPQFLLQFSEVLAKWRCFFHQMAVEQGQAGLAAMDTKLEVAVLQESVAKLGIASRAEIEDWFTAETLGVSGTMDLLDWSSLIDSRTKLSKHLVVPNAQTGQLEPLLSRFTEEEELQMTRMLQRMDVLAKKATEMGVRLMVDAEQTYFQPAISRLTLEMQRKFNVEKPLIFNTYQCYLKDAYDNVTLDVELARREGWCFGAKLVRGAYLAQERARAAEIGYEDPINPTYEATNAMYHRCLDYVLEELKHNAKAKVMVASHNEDTVRFALRRMEELGLHPADHRVYFGQLLGMCDQISFPLGQAGYPVYKYVPYGPVMEVLPYLSRRALENSSLMKGTHRERQLLWLELLRRLRTGNLFHRPA.

Positions 155–177 are disordered; sequence AEHKEMESCTSAAERDGSGTNKR. An N6-acetyllysine mark is found at lysine 368 and lysine 486.

Belongs to the proline oxidase family. Requires FAD as cofactor. In terms of tissue distribution, expressed in lung, skeletal muscle and brain, to a lesser extent in heart and kidney, and weakly in liver, placenta and pancreas.

The protein localises to the mitochondrion matrix. The catalysed reaction is L-proline + a quinone = (S)-1-pyrroline-5-carboxylate + a quinol + H(+). The protein operates within amino-acid degradation; L-proline degradation into L-glutamate; L-glutamate from L-proline: step 1/2. Its function is as follows. Converts proline to delta-1-pyrroline-5-carboxylate. The sequence is that of Proline dehydrogenase 1, mitochondrial from Homo sapiens (Human).